We begin with the raw amino-acid sequence, 61 residues long: Statherin (61 aa).

The N-terminal stretch at 1–19 is a signal peptide; sequence MXFLXFXLXLLXMXXMXXX. Residues 20–25 form a hydroxyapatite-binding; inhibits crystal growth region; it reads DSSEEK. Phosphoserine occurs at positions 21 and 22. The segment at 37 to 61 is disordered; that stretch reads RYGPYQPFAPQPLYPQPYQPYQPQY. The tract at residues 37–61 is hydrophobic; inhibits precipitation of calcium phosphate salts; sequence RYGPYQPFAPQPLYPQPYQPYQPQY. Residues 43-61 are compositionally biased toward pro residues; sequence PFAPQPLYPQPYQPYQPQY.

The protein belongs to the histatin/statherin family. Secreted by parotid and submandibular glands.

It is found in the secreted. Its function is as follows. Salivary protein that stabilizes saliva supersaturated with calcium salts by inhibiting the precipitation of calcium phosphate salts. It also modulates hydroxyapatite crystal formation on the tooth surface. The polypeptide is Statherin (STATH) (Macaca fascicularis (Crab-eating macaque)).